The primary structure comprises 115 residues: NADH-ubiquinone oxidoreductase chain 3 (115 aa).

Helical transmembrane passes span 3–23, 55–75, and 86–106; these read LMLTLFINTSLASVLVLIAFW, FFLVAITFLLFDLEIALLLPL, and TMLTMALILISLLAASLAYEW.

Belongs to the complex I subunit 3 family. In terms of assembly, core subunit of respiratory chain NADH dehydrogenase (Complex I) which is composed of 45 different subunits. Interacts with TMEM186. Interacts with TMEM242.

Its subcellular location is the mitochondrion inner membrane. The catalysed reaction is a ubiquinone + NADH + 5 H(+)(in) = a ubiquinol + NAD(+) + 4 H(+)(out). Functionally, core subunit of the mitochondrial membrane respiratory chain NADH dehydrogenase (Complex I) which catalyzes electron transfer from NADH through the respiratory chain, using ubiquinone as an electron acceptor. Essential for the catalytic activity of complex I. The protein is NADH-ubiquinone oxidoreductase chain 3 of Ceratotherium simum (White rhinoceros).